A 171-amino-acid polypeptide reads, in one-letter code: Neudesin (171 aa).

A signal peptide spans 1–30 (MARPAPWWWLRPLAALALALALVRVPSARA). The 86-residue stretch at 43-128 (VRLFTEEELA…KELEALDDIF (86 aa)) folds into the Cytochrome b5 heme-binding domain. Lys-135 is modified (N6-acetyllysine). Residues 151–171 (GSPNLDFKPEDQPHFDIKDEF) are disordered. A compositionally biased stretch (basic and acidic residues) spans 157–171 (FKPEDQPHFDIKDEF).

It belongs to the cytochrome b5 family. MAPR subfamily. As to quaternary structure, interacts with PINK1 and PARK7.

Its subcellular location is the secreted. The protein localises to the extracellular space. The protein resides in the mitochondrion. It localises to the endoplasmic reticulum. In terms of biological role, acts as a neurotrophic factor in postnatal mature neurons enhancing neuronal survival. Promotes cell proliferation and neurogenesis in undifferentiated neural progenitor cells at the embryonic stage and inhibits differentiation of astrocytes. Its neurotrophic activity is exerted via MAPK1/ERK2, MAPK3/ERK1 and AKT1/AKT pathways. Neurotrophic activity is enhanced by binding to heme. Also acts as an anorexigenic neurotrophic factor that contributes to energy balance. The polypeptide is Neudesin (Rattus norvegicus (Rat)).